Reading from the N-terminus, the 189-residue chain is Mediator of RNA polymerase II transcription subunit 21 (189 aa).

Residues 50–102 (KIPKNSTAPPVPAGAPVPSQSSPPPPQTQRGASEAAADPNLPPAPDSPRTFAS) are disordered. Pro residues predominate over residues 58 to 76 (PPVPAGAPVPSQSSPPPPQ). Residues 127-170 (GIDSSEAEQEKRIRELEAELRGVEEEREAKIRELRTLGRTLERV) are a coiled coil.

This sequence belongs to the Mediator complex subunit 21 family. In terms of assembly, component of the Mediator complex.

It localises to the nucleus. In terms of biological role, component of the Mediator complex, a coactivator involved in the regulated transcription of nearly all RNA polymerase II-dependent genes. Mediator functions as a bridge to convey information from gene-specific regulatory proteins to the basal RNA polymerase II transcription machinery. Mediator is recruited to promoters by direct interactions with regulatory proteins and serves as a scaffold for the assembly of a functional preinitiation complex with RNA polymerase II and the general transcription factors. The polypeptide is Mediator of RNA polymerase II transcription subunit 21 (srb7) (Aspergillus clavatus (strain ATCC 1007 / CBS 513.65 / DSM 816 / NCTC 3887 / NRRL 1 / QM 1276 / 107)).